A 303-amino-acid chain; its full sequence is Probable 5-dehydro-4-deoxyglucarate dehydratase (303 aa).

It belongs to the DapA family.

The enzyme catalyses 5-dehydro-4-deoxy-D-glucarate + H(+) = 2,5-dioxopentanoate + CO2 + H2O. It participates in carbohydrate acid metabolism; D-glucarate degradation; 2,5-dioxopentanoate from D-glucarate: step 2/2. This is Probable 5-dehydro-4-deoxyglucarate dehydratase from Pseudomonas putida (strain ATCC 700007 / DSM 6899 / JCM 31910 / BCRC 17059 / LMG 24140 / F1).